We begin with the raw amino-acid sequence, 364 residues long: MEINNRVAIGMSGGVDSSVAAYLLKKQGFDVIGLTMRVWVDHEAKAFDSDKSCCSLKATQDAKKVAEILGIPHYTVDLSKIFYDKIVNYFVNEYLKGRTPNPCVLCNRQIKFGELLEKAFELGAYYIATGHYVRKEYDEKTKRYLLKKGIDSSKDQSYVLYRLTQKQLEHALFPLGNYKKEEIRALAEELKLPVAKKPESQEICFIPDNDYSGLIKRQVKDEIKPGEFRDVHGKFLGYHKGIIHYTIGQRRGLGLSSDRPLYVVDIDVKNNVVVVGHQEDVWGEELISSNNNFISIEKLEKEMKVTAKIRYTAKEEEAIIKPYEEDKVLVKFLKPQRAITPGQSVVFYDKDVVVGGGIIERKLK.

Residues 10-17 (GMSGGVDS) and Met-36 each bind ATP. Cys-106 acts as the Nucleophile in catalysis. A disulfide bridge links Cys-106 with Cys-204. Position 130 (Gly-130) interacts with ATP. Residues 154–156 (KDQ) form an interaction with tRNA region. Cys-204 serves as the catalytic Cysteine persulfide intermediate. An interaction with tRNA region spans residues 310 to 311 (RY).

This sequence belongs to the MnmA/TRMU family.

The protein resides in the cytoplasm. The catalysed reaction is S-sulfanyl-L-cysteinyl-[protein] + uridine(34) in tRNA + AH2 + ATP = 2-thiouridine(34) in tRNA + L-cysteinyl-[protein] + A + AMP + diphosphate + H(+). Functionally, catalyzes the 2-thiolation of uridine at the wobble position (U34) of tRNA, leading to the formation of s(2)U34. The polypeptide is tRNA-specific 2-thiouridylase MnmA 2 (Thermoanaerobacter pseudethanolicus (strain ATCC 33223 / 39E) (Clostridium thermohydrosulfuricum)).